The primary structure comprises 221 residues: Oxaloacetate tautomerase FAHD1, mitochondrial (221 aa).

The N-terminal 24 residues, 1–24 (MAASRPLSRFWEWGKNIVCVGRNY), are a transit peptide targeting the mitochondrion. Arginine 22 contributes to the oxalate binding site. At serine 37 the chain carries Phosphoserine. 3 residues coordinate Mg(2+): glutamate 68, glutamate 70, and aspartate 99. Lysine 110 is modified (N6-acetyllysine). Lysine 112 carries the post-translational modification N6-succinyllysine. Oxalate-binding residues include lysine 120 and threonine 189.

Belongs to the FAH family. Homodimer. Mg(2+) is required as a cofactor. It depends on Mn(2+) as a cofactor. As to expression, ubiquitous (at protein level).

Its subcellular location is the mitochondrion. The protein resides in the cytoplasm. It localises to the cytosol. It catalyses the reaction oxaloacetate = enol-oxaloacetate. It carries out the reaction oxaloacetate + H(+) = pyruvate + CO2. The catalysed reaction is a 3-acylpyruvate + H2O = a carboxylate + pyruvate + H(+). The enzyme catalyses acetylpyruvate + H2O = acetate + pyruvate + H(+). It catalyses the reaction 3-fumarylpyruvate + H2O = fumarate + pyruvate + H(+). Its activity is regulated as follows. Oxaloacetate decarboxylation is competitively inhibited by oxalate. In terms of biological role, tautomerase that converts enol-oxaloacetate, a strong inhibitor of succinate dehydrogenase, to the physiological keto form of oxaloacetate. It is thereby required to maximize aerobic respiration efficiency by preventing succinate dehydrogenase inhibition. Also acts as a weak oxaloacetate decarboxylase (ODx), catalyzing the decarboxylation of oxaloacetate (OAA) to pyruvate and CO(2), and as such is likely a regulatory enzyme in the TCA cycle. Also displays acylpyruvase activity, being able to hydrolyze acetylpyruvate and fumarylpyruvate in vitro. Exhibits only a weak hydrolase activity on methylacetopyruvate and acetylacetone, and no activity toward acetoacetyl-CoA. The polypeptide is Oxaloacetate tautomerase FAHD1, mitochondrial (Homo sapiens (Human)).